We begin with the raw amino-acid sequence, 495 residues long: Cytochrome P450 monooxygenase 64 (495 aa).

The chain crosses the membrane as a helical span at residues 2-22; sequence FLQIVTSVLATGLLYALISVL. 2 N-linked (GlcNAc...) asparagine glycosylation sites follow: Asn-25 and Asn-198. Cys-428 is a heme binding site.

Belongs to the cytochrome P450 family. The cofactor is heme.

Its subcellular location is the membrane. Its pathway is secondary metabolite biosynthesis. Its function is as follows. Cytochrome P450 monooxygenase that is able to use 4-ethoxybenzoic acid as a substrate for oxidation. In Postia placenta (strain ATCC 44394 / Madison 698-R) (Brown rot fungus), this protein is Cytochrome P450 monooxygenase 64.